The primary structure comprises 424 residues: Omega-6 fatty acid desaturase, chloroplastic (424 aa).

A chloroplast-targeting transit peptide spans 1-63 (MACTLADSLL…TRNKVTVIHA (63 aa)). Valine 64 is modified (N-acetylvaline). The short motif at 165–169 (HDCAH) is the Histidine box-1 element. Residues 201–205 (HDRHH) carry the Histidine box-2 motif. The Histidine box-3 signature appears at 361 to 365 (HIPHH).

This sequence belongs to the fatty acid desaturase type 1 family.

It localises to the plastid. It is found in the chloroplast membrane. The enzyme catalyses a (9Z)-octadecenoyl-containing glycerolipid + 2 reduced [2Fe-2S]-[ferredoxin] + O2 + 2 H(+) = a (9Z,12Z)-octadecadienoyl-containing glycerolipid + 2 oxidized [2Fe-2S]-[ferredoxin] + 2 H2O. It participates in lipid metabolism; polyunsaturated fatty acid biosynthesis. In terms of biological role, chloroplast omega-6 fatty acid desaturase introduces the second double bond in the biosynthesis of 16:3 and 18:3 fatty acids, important constituents of plant membranes. It is thought to use ferredoxin as an electron donor and to act on fatty acids esterified to galactolipids, sulfolipids and phosphatidylglycerol. The chain is Omega-6 fatty acid desaturase, chloroplastic from Glycine max (Soybean).